The following is a 354-amino-acid chain: MPAAGSEPSRPPSPPGVQEQSAEPRPPPPPHGELQYLGQIEHILRCGFRRDDRTGTGTLSVFGMQARYNLRDEFPLLTTKRVFWKGVLEELLWFIKGSTNAKELSSKGVKIWDANGSRDFLDGLGFSDRAEGDLGPVYGFQWRHFGAEYKDMDSEYSGQGVDQLQKVIDTIKTNPNDRRIILCAWNPKDLPLMALPPCHALCQFYVVNGELSCQLYQRSGDMGLGVPFNIASYALLTYMIAHITDLKPGDFVHTLGDAHIYLNHIEPLKTQALMELRGQSSRSLDGDGQAGTSRWAPVATDTERDRCCELQREPRPFPKLKILRKVETIDDFQAEDFQIEGYNPNPTIKMEMAV.

The segment at 1–32 (MPAAGSEPSRPPSPPGVQEQSAEPRPPPPPHG) is disordered. Arginine 53 serves as a coordination point for dUMP. At serine 117 the chain carries Phosphoserine. DUMP is bound at residue 178 to 179 (RR). Cysteine 198 functions as the Nucleophile in the catalytic mechanism. DUMP is bound by residues 218–221 (RSGD), asparagine 229, and 259–261 (HIY). (6R)-5,10-methylene-5,6,7,8-tetrahydrofolate is bound at residue aspartate 221. A Glycyl lysine isopeptide (Lys-Gly) (interchain with G-Cter in SUMO2) cross-link involves residue lysine 349. Alanine 353 is a binding site for (6R)-5,10-methylene-5,6,7,8-tetrahydrofolate.

It belongs to the thymidylate synthase family. In terms of assembly, homodimer.

The protein localises to the nucleus. It is found in the cytoplasm. It localises to the mitochondrion. Its subcellular location is the mitochondrion matrix. The protein resides in the mitochondrion inner membrane. The catalysed reaction is dUMP + (6R)-5,10-methylene-5,6,7,8-tetrahydrofolate = 7,8-dihydrofolate + dTMP. Its pathway is pyrimidine metabolism; dTTP biosynthesis. Functionally, catalyzes the reductive methylation of 2'-deoxyuridine 5'-monophosphate (dUMP) to thymidine 5'-monophosphate (dTMP), using the cosubstrate, 5,10- methylenetetrahydrofolate (CH2H4folate) as a 1-carbon donor and reductant and contributes to the de novo mitochondrial thymidylate biosynthesis pathway. The chain is Thymidylate synthase (TYMS) from Bos taurus (Bovine).